The sequence spans 697 residues: Polyribonucleotide nucleotidyltransferase (697 aa).

Residues aspartate 489 and aspartate 495 each contribute to the Mg(2+) site. A KH domain is found at 556–615; that stretch reads PRIETIKIKPDKIREVIGSGGKVIRGITEATGVKIEIQDDGTINIASADPEATKKAIAMI. In terms of domain architecture, S1 motif spans 625–693; the sequence is GKTYKGRIVK…RSGRVKLSRK (69 aa).

It belongs to the polyribonucleotide nucleotidyltransferase family. It depends on Mg(2+) as a cofactor.

The protein localises to the cytoplasm. The catalysed reaction is RNA(n+1) + phosphate = RNA(n) + a ribonucleoside 5'-diphosphate. Its function is as follows. Involved in mRNA degradation. Catalyzes the phosphorolysis of single-stranded polyribonucleotides processively in the 3'- to 5'-direction. This chain is Polyribonucleotide nucleotidyltransferase, found in Bdellovibrio bacteriovorus (strain ATCC 15356 / DSM 50701 / NCIMB 9529 / HD100).